The following is an 831-amino-acid chain: Heat shock 70 kDa protein 14 (831 aa).

2 disordered regions span residues 503 to 579 (EEVE…KKKV) and 786 to 831 (TKPK…EGST). Positions 509-526 (VTKEHSEETTKMDSDKAS) are enriched in basic and acidic residues. A Phosphoserine modification is found at S533.

Belongs to the heat shock protein 70 (TC 1.A.33) family. HSP110/SSE subfamily. In terms of assembly, interacts with HTT1 in both cytoplasm and nucleus. In terms of tissue distribution, constitutively expressed.

The protein localises to the cytoplasm. It is found in the nucleus. In terms of biological role, in cooperation with other chaperones, Hsp70s are key components that facilitate folding of de novo synthesized proteins, assist translocation of precursor proteins into organelles, and are responsible for degradation of damaged protein under stress conditions. The chain is Heat shock 70 kDa protein 14 (HSP70-14) from Arabidopsis thaliana (Mouse-ear cress).